Here is a 143-residue protein sequence, read N- to C-terminus: Transcriptional regulator MraZ (143 aa).

SpoVT-AbrB domains are found at residues 5 to 47 (EYTH…PLIE) and 76 to 119 (ACEC…DAER).

Belongs to the MraZ family. In terms of assembly, forms oligomers.

The protein localises to the cytoplasm. The protein resides in the nucleoid. The polypeptide is Transcriptional regulator MraZ (Limosilactobacillus fermentum (strain NBRC 3956 / LMG 18251) (Lactobacillus fermentum)).